The primary structure comprises 104 residues: Large ribosomal subunit protein uL24 (104 aa).

Belongs to the universal ribosomal protein uL24 family. Part of the 50S ribosomal subunit.

Functionally, one of two assembly initiator proteins, it binds directly to the 5'-end of the 23S rRNA, where it nucleates assembly of the 50S subunit. One of the proteins that surrounds the polypeptide exit tunnel on the outside of the subunit. This is Large ribosomal subunit protein uL24 from Photobacterium profundum (strain SS9).